The chain runs to 374 residues: Putative glutamate--cysteine ligase 2 (374 aa).

The protein belongs to the glutamate--cysteine ligase type 2 family. YbdK subfamily.

It catalyses the reaction L-cysteine + L-glutamate + ATP = gamma-L-glutamyl-L-cysteine + ADP + phosphate + H(+). Functionally, ATP-dependent carboxylate-amine ligase which exhibits weak glutamate--cysteine ligase activity. The sequence is that of Putative glutamate--cysteine ligase 2 from Paracidovorax citrulli (strain AAC00-1) (Acidovorax citrulli).